Here is a 227-residue protein sequence, read N- to C-terminus: Cytochrome c oxidase subunit 2 (227 aa).

Over 1 to 14 the chain is Mitochondrial intermembrane; that stretch reads MAHATQVGLQDATS. A helical membrane pass occupies residues 15 to 45; the sequence is PIMEELISFHDHALMIIFLISFLVLYALFLT. Residues 46-59 lie on the Mitochondrial matrix side of the membrane; it reads LTTKLTNTNITDAQ. The helical transmembrane segment at 60–87 threads the bilayer; it reads EMETVWTILPAIILVLIALPSLRILYLT. The Mitochondrial intermembrane segment spans residues 88–227; the sequence is DEINDPSFTI…IFEMGPVFTL (140 aa). Cu cation-binding residues include H161, C196, E198, C200, H204, and M207. A Mg(2+)-binding site is contributed by E198.

This sequence belongs to the cytochrome c oxidase subunit 2 family. Component of the cytochrome c oxidase (complex IV, CIV), a multisubunit enzyme composed of 14 subunits. The complex is composed of a catalytic core of 3 subunits MT-CO1, MT-CO2 and MT-CO3, encoded in the mitochondrial DNA, and 11 supernumerary subunits COX4I, COX5A, COX5B, COX6A, COX6B, COX6C, COX7A, COX7B, COX7C, COX8 and NDUFA4, which are encoded in the nuclear genome. The complex exists as a monomer or a dimer and forms supercomplexes (SCs) in the inner mitochondrial membrane with NADH-ubiquinone oxidoreductase (complex I, CI) and ubiquinol-cytochrome c oxidoreductase (cytochrome b-c1 complex, complex III, CIII), resulting in different assemblies (supercomplex SCI(1)III(2)IV(1) and megacomplex MCI(2)III(2)IV(2)). Found in a complex with TMEM177, COA6, COX18, COX20, SCO1 and SCO2. Interacts with TMEM177 in a COX20-dependent manner. Interacts with COX20. Interacts with COX16. Requires Cu cation as cofactor.

The protein resides in the mitochondrion inner membrane. The catalysed reaction is 4 Fe(II)-[cytochrome c] + O2 + 8 H(+)(in) = 4 Fe(III)-[cytochrome c] + 2 H2O + 4 H(+)(out). Its function is as follows. Component of the cytochrome c oxidase, the last enzyme in the mitochondrial electron transport chain which drives oxidative phosphorylation. The respiratory chain contains 3 multisubunit complexes succinate dehydrogenase (complex II, CII), ubiquinol-cytochrome c oxidoreductase (cytochrome b-c1 complex, complex III, CIII) and cytochrome c oxidase (complex IV, CIV), that cooperate to transfer electrons derived from NADH and succinate to molecular oxygen, creating an electrochemical gradient over the inner membrane that drives transmembrane transport and the ATP synthase. Cytochrome c oxidase is the component of the respiratory chain that catalyzes the reduction of oxygen to water. Electrons originating from reduced cytochrome c in the intermembrane space (IMS) are transferred via the dinuclear copper A center (CU(A)) of subunit 2 and heme A of subunit 1 to the active site in subunit 1, a binuclear center (BNC) formed by heme A3 and copper B (CU(B)). The BNC reduces molecular oxygen to 2 water molecules using 4 electrons from cytochrome c in the IMS and 4 protons from the mitochondrial matrix. This Hylobates lar (Lar gibbon) protein is Cytochrome c oxidase subunit 2 (MT-CO2).